Here is a 169-residue protein sequence, read N- to C-terminus: MSEEKQNGQIQEETVENSENQNNELEKLQAEYNELKDTYLRANAEFENIKKRMEKEKISATIYANESFAKDLLDVVDALEAAVNVEANDEISLKIKEGVQNTLDLLLKKLEKHMVKVIDAEGEFDPNLHEAMFHVESADHESNHIVQLLQKGYMMNDRIIRSAKVSVAK.

Residues 1 to 25 (MSEEKQNGQIQEETVENSENQNNEL) form a disordered region. Positions 7–23 (NGQIQEETVENSENQNN) are enriched in polar residues.

The protein belongs to the GrpE family. In terms of assembly, homodimer.

The protein resides in the cytoplasm. Functionally, participates actively in the response to hyperosmotic and heat shock by preventing the aggregation of stress-denatured proteins, in association with DnaK and GrpE. It is the nucleotide exchange factor for DnaK and may function as a thermosensor. Unfolded proteins bind initially to DnaJ; upon interaction with the DnaJ-bound protein, DnaK hydrolyzes its bound ATP, resulting in the formation of a stable complex. GrpE releases ADP from DnaK; ATP binding to DnaK triggers the release of the substrate protein, thus completing the reaction cycle. Several rounds of ATP-dependent interactions between DnaJ, DnaK and GrpE are required for fully efficient folding. This chain is Protein GrpE, found in Campylobacter lari (strain RM2100 / D67 / ATCC BAA-1060).